A 142-amino-acid chain; its full sequence is Large ribosomal subunit protein bL17 (142 aa).

The protein belongs to the bacterial ribosomal protein bL17 family. Part of the 50S ribosomal subunit. Contacts protein L32.

This chain is Large ribosomal subunit protein bL17, found in Chlamydia muridarum (strain MoPn / Nigg).